The sequence spans 418 residues: Deubiquitinase and deneddylase Dub1 (418 aa).

Positions 1–10 (MLSPTNSISK) are enriched in polar residues. The interval 1 to 23 (MLSPTNSISKTVPAPPQDSSKPV) is disordered. The chain crosses the membrane as a helical span at residues 40 to 60 (TALAVLLVVVTLGLILLFYSF). A disordered region spans residues 75 to 145 (STKEHPTISI…LPPKAPKPVK (71 aa)). Residues 86 to 141 (EPLPSPPLAVPRPSTPPPPVISRPSTPPAPTPAISPPSTPSAPKPSTPPPLPPKAP) are compositionally biased toward pro residues. Active-site residues include His-288, Asp-305, and Cys-358.

Belongs to the peptidase C48 family.

It localises to the secreted. It is found in the host cell. The protein resides in the membrane. In terms of biological role, effector proteins function to alter host cell physiology and promote bacterial survival in host tissues. This protease possesses deubiquitinating and deneddylating activities. This Chlamydia trachomatis serovar A (strain ATCC VR-571B / DSM 19440 / HAR-13) protein is Deubiquitinase and deneddylase Dub1 (cdu1).